We begin with the raw amino-acid sequence, 432 residues long: 3-phosphoshikimate 1-carboxyvinyltransferase (432 aa).

Residues Lys23, Ser24, and Arg28 each contribute to the 3-phosphoshikimate site. Lys23 provides a ligand contact to phosphoenolpyruvate. Residues Gly96 and Arg125 each coordinate phosphoenolpyruvate. The 3-phosphoshikimate site is built by Ser170, Gln172, Asp318, and Lys345. Gln172 provides a ligand contact to phosphoenolpyruvate. The active-site Proton acceptor is Asp318. The phosphoenolpyruvate site is built by Arg349 and Arg391.

The protein belongs to the EPSP synthase family. Monomer.

It localises to the cytoplasm. It catalyses the reaction 3-phosphoshikimate + phosphoenolpyruvate = 5-O-(1-carboxyvinyl)-3-phosphoshikimate + phosphate. It functions in the pathway metabolic intermediate biosynthesis; chorismate biosynthesis; chorismate from D-erythrose 4-phosphate and phosphoenolpyruvate: step 6/7. Its function is as follows. Catalyzes the transfer of the enolpyruvyl moiety of phosphoenolpyruvate (PEP) to the 5-hydroxyl of shikimate-3-phosphate (S3P) to produce enolpyruvyl shikimate-3-phosphate and inorganic phosphate. This is 3-phosphoshikimate 1-carboxyvinyltransferase from Gloeobacter violaceus (strain ATCC 29082 / PCC 7421).